Here is a 447-residue protein sequence, read N- to C-terminus: Probable 3-deoxy-D-manno-octulosonic acid transferase, mitochondrial (447 aa).

The N-terminal 32 residues, 1 to 32, are a transit peptide targeting the mitochondrion; the sequence is MKLGVFVYRLYRALTYGVSPLIHLHIRWRRLR. The active-site Proton acceptor is the E66. CMP contacts are provided by residues 278 to 279, 320 to 322, and 347 to 350; these read PR, LGE, and NLSE.

This sequence belongs to the glycosyltransferase group 1 family. Glycosyltransferase 30 subfamily. As to expression, expressed in leaves, stems and flowers.

The protein localises to the mitochondrion. The enzyme catalyses lipid IVA (E. coli) + CMP-3-deoxy-beta-D-manno-octulosonate = alpha-Kdo-(2-&gt;6)-lipid IVA (E. coli) + CMP + H(+). The catalysed reaction is alpha-Kdo-(2-&gt;6)-lipid IVA (E. coli) + CMP-3-deoxy-beta-D-manno-octulosonate = alpha-Kdo-(2-&gt;4)-alpha-Kdo-(2-&gt;6)-lipid IVA (E. coli) + CMP + H(+). The protein operates within glycolipid biosynthesis; KDO(2)-lipid A biosynthesis; KDO(2)-lipid A from CMP-3-deoxy-D-manno-octulosonate and lipid IV(A): step 1/4. It participates in glycolipid biosynthesis; KDO(2)-lipid A biosynthesis; KDO(2)-lipid A from CMP-3-deoxy-D-manno-octulosonate and lipid IV(A): step 2/4. Its function is as follows. Involved in the biosynthesis of lipid A, a phosphorylated glycolipid that in bacteria anchors the lipopolysaccharide to the outer membrane of the cell. Catalyzes the transfer of two 3-deoxy-D-manno-octulosonate (Kdo) residues from CMP-Kdo to lipid IV(A), the tetraacyldisaccharide-1,4'-bisphosphate precursor of lipid A. Lipid A-like molecules in plants may serve as structural components of the outer membranes of mitochondria and/or chloroplasts, or may be involved in signal transduction or plant defense responses. This is Probable 3-deoxy-D-manno-octulosonic acid transferase, mitochondrial (KDTA) from Arabidopsis thaliana (Mouse-ear cress).